A 367-amino-acid chain; its full sequence is DNA replication and repair protein RecF (367 aa).

Position 30 to 37 (30 to 37 (GENAQGKT)) interacts with ATP.

The protein belongs to the RecF family.

The protein resides in the cytoplasm. In terms of biological role, the RecF protein is involved in DNA metabolism; it is required for DNA replication and normal SOS inducibility. RecF binds preferentially to single-stranded, linear DNA. It also seems to bind ATP. This Chlamydia caviae (strain ATCC VR-813 / DSM 19441 / 03DC25 / GPIC) (Chlamydophila caviae) protein is DNA replication and repair protein RecF.